The primary structure comprises 312 residues: MAELACFVSFSLTEDKVVWYPINKKAVQTMLCAKVEKDQRSNYYDTILYGVAPPPEFRNRFKTNERYGLDYESDQYTELVNLLADTLNMVSMPTEKFQFDIVKTVVQVRHLENLLCRIKDVNDILNANVKLRVKAVMIACNLVNETETTPLTESNDIVYQDSYFTITKLDYSNHKLLPLMADEYKITINTKTDIPDRNQTAFAAYIRYNFNKFAAISHGKRHWRLVLHSQLMSHAERLDRKIKSDKKHGRQFSYDDGDMAFVHPGWKTCIGQLCGGTTFEVAKTSLYSIKPSKTVRTATNKIESDLISMVGN.

Residues 107-109, K185, and 218-220 contribute to the ATP site; these read QVR and HGK. Residues 202-238 are RNA-binding; the sequence is FAAYIRYNFNKFAAISHGKRHWRLVLHSQLMSHAERL. The active-site For NTPase and RTPase activities is H222. An ATP-binding site is contributed by R224.

It belongs to the rotavirus NSP2 family. As to quaternary structure, homooctamer. Interacts with VP1; this interaction is weak. Interacts with NSP5; this interaction leads to up-regulation of NSP5 phosphorylation and formation of viral factories. Interacts with host DCP1A, DCP1B, DDX6, EDC4 and EIF2S1/eIF2-alpha; these interactions are probably part of the sequestration of some host SGs and PBs proteins in viral factories. Mg(2+) serves as cofactor.

It is found in the host cytoplasm. Its function is as follows. Participates in replication and packaging of the viral genome. Plays a crucial role, together with NSP5, in the formation of virus factories (viroplasms), which are large inclusions in the host cytoplasm where replication intermediates are assembled and viral RNA replication takes place. Displays ssRNA binding, NTPase, RNA triphosphatase (RTPase) and ATP-independent helix-unwinding activities. The unwinding activity may prepare and organize plus-strand RNAs for packaging and replication by removing interfering secondary structures. The RTPase activity plays a role in the removal of the gamma-phosphate from the rotavirus RNA minus strands of dsRNA genome segments. Participates in the selective exclusion of host proteins from stress granules (SG) and P bodies (PB). Also participates in the sequestration of these remodeled organelles in viral factories. The polypeptide is Non-structural protein 2 (Rotavirus C (isolate RVC/Human/United Kingdom/Bristol/1989) (RV-C)).